The sequence spans 114 residues: uncharacterized protein (114 aa).

This is an uncharacterized protein from Human cytomegalovirus (strain AD169) (HHV-5).